The primary structure comprises 435 residues: Nuclear receptor subfamily 6 group A member 1 (435 aa).

The segment at residues Gln11 to Glu86 is a DNA-binding region (nuclear receptor). NR C4-type zinc fingers lie at residues Cys14 to Cys34 and Cys50 to Cys69. A disordered region spans residues Ile84–Glu158. Residues Asn121–Glu141 are compositionally biased toward polar residues. Residues Ser142–Ser156 show a composition bias toward low complexity. Residues Gln204–Glu435 form the NR LBD domain.

This sequence belongs to the nuclear hormone receptor family. NR6 subfamily. As to quaternary structure, homodimer. Transiently expressed in differentiating cells of all embryonic germ layers. Expressed in an anterior to posterior concentration gradient from late gastrula to midneurula stages. Shows a complicated spatio-temporal pattern of expression during neurulation, being predominant in the neural plate and neural crest in midneurula embryos. At late tailbud (stage 30), mainly expressed in the head mesenchyme, gill arches and tail tip. Expression persists in the epidermis, somites and endoderm, and in the central nervous system, expression is restricted to the midbrain, hindbrain and part of the spinal cord. Isoforms Oo and Em are both expressed in the brain and isoform Oo is expressed in the germ cells of both the adult testis and ovary.

The protein localises to the cytoplasm. It localises to the nucleus. Probable orphan nuclear receptor. Binds to a response element containing repeats of the motif 5'-AGGTCA-3'. Required for anterior-posterior patterning during organogenesis. Acts with chordin to play a role in patterning the midbrain-hindbrain. Isoform Em is required for integrin-mediated cell matrix interaction during neurulation and for the morphogenetic movements leading to formation of the neural tube. Also mediates the effect of retinoic acid on primary neurogenesis. The sequence is that of Nuclear receptor subfamily 6 group A member 1 from Xenopus laevis (African clawed frog).